The sequence spans 187 residues: Large ribosomal subunit protein uL5 (187 aa).

This sequence belongs to the universal ribosomal protein uL5 family. As to quaternary structure, part of the 50S ribosomal subunit; part of the 5S rRNA/L5/L18/L25 subcomplex. Contacts the 5S rRNA and the P site tRNA. Forms a bridge to the 30S subunit in the 70S ribosome.

Its function is as follows. This is one of the proteins that bind and probably mediate the attachment of the 5S RNA into the large ribosomal subunit, where it forms part of the central protuberance. In the 70S ribosome it contacts protein S13 of the 30S subunit (bridge B1b), connecting the 2 subunits; this bridge is implicated in subunit movement. Contacts the P site tRNA; the 5S rRNA and some of its associated proteins might help stabilize positioning of ribosome-bound tRNAs. This chain is Large ribosomal subunit protein uL5, found in Mycobacterium leprae (strain Br4923).